The primary structure comprises 342 residues: Deoxyhypusine synthase regulatory subunit (342 aa).

NAD(+) is bound by residues 72–76 (SNLIS), 98–100 (TAG), glutamate 104, aspartate 213, 282–283 (TG), and 316–317 (DA).

It belongs to the deoxyhypusine synthase family. As to quaternary structure, heterotetramer formed by a homodimer of the non-catalytic regulatory subunit DHSp and a homodimer of the catalytic subunit DHSc where DHSc appears to bind spermidine and DHSp appears to bind NAD(+).

Its pathway is protein modification; eIF5A hypusination. Its function is as follows. Required for the activation and stability of deoxyhypusine synthase DHSc. Required for cell growth and survival. In Trypanosoma brucei brucei (strain 927/4 GUTat10.1), this protein is Deoxyhypusine synthase regulatory subunit.